The chain runs to 331 residues: D-lactate/D-glycerate dehydrogenase (331 aa).

Residues 154 to 155 (RI), Asp-174, 205 to 206 (VP), Asn-211, 232 to 234 (FAR), and Asp-258 contribute to the NAD(+) site. The active site involves Arg-234. Residue Glu-263 is part of the active site. Catalysis depends on His-295, which acts as the Proton donor.

The protein belongs to the D-isomer specific 2-hydroxyacid dehydrogenase family. In terms of assembly, homodimer.

The catalysed reaction is (R)-lactate + NAD(+) = pyruvate + NADH + H(+). It carries out the reaction (R)-glycerate + NAD(+) = 3-hydroxypyruvate + NADH + H(+). Functionally, has both D-lactate and D-glycerate dehydrogenase activities. Equally active on pyruvate and hydroxypyruvate. In Pediococcus acidilactici, this protein is D-lactate/D-glycerate dehydrogenase.